Reading from the N-terminus, the 627-residue chain is Pheromone B alpha 2 receptor (627 aa).

Residues 1–7 (MLDPTYP) are Extracellular-facing. Residues 8–28 (AFPIFAFLGIVCCLVPLPWHL) form a helical membrane-spanning segment. Over 29–35 (QSWNSGT) the chain is Cytoplasmic. The helical transmembrane segment at 36–56 (CFLMIWTAVACLNMFVNSIIW) threads the bilayer. Residues 57-69 (KDHAQNVAPVWCE) are Extracellular-facing. Residues 70–90 (ISIRITLGASVGIPASSLCIV) traverse the membrane as a helical segment. The Cytoplasmic segment spans residues 91-102 (RRLYSIAKKFRA). A helical transmembrane segment spans residues 103–123 (VMVDALICVLFPILYIILQIV). Residues 124–150 (VQGHRFNILENIGCFPAIINTPLTYPL) lie on the Extracellular side of the membrane. Residues 151–171 (TFMWPVLIGVISFIYSTLALI) form a helical membrane-spanning segment. The Cytoplasmic segment spans residues 172-197 (QFNRHRLQFTQFLHSNSTLSVSRYLR). The chain crosses the membrane as a helical span at residues 198 to 218 (LMALAMTEMMCTTPMGVFVII). Over 219-260 (LNAKATPVSPYVSWAVTHYGYGRIDQVPAIIWRSNRLLVASY) the chain is Extracellular. A helical membrane pass occupies residues 261–281 (ELTRWSSPAIALIFFFYFGFA). Topologically, residues 282 to 627 (QEARRNYAAA…ASPRTHRASV (346 aa)) are cytoplasmic. 3 disordered regions span residues 363–405 (LPRP…SSPI), 479–505 (TVPQ…SSSA), and 518–627 (LPST…RASV). Residues 372–387 (SSSGFSSSDSTRFGSS) show a composition bias toward low complexity. Composition is skewed to polar residues over residues 519 to 533 (PSTT…SLPT) and 545 to 555 (SLSQLFGISSM). Low complexity predominate over residues 569–607 (ATGTASPTTTAPAPASTTIAPASATMAPATTTTAPTTIA).

It belongs to the G-protein coupled receptor 4 family.

The protein resides in the cell membrane. Functionally, receptor for the BAP2 pheromone, a prenylated mating factor. The receptor/pheromone interaction may have a role in the fusion of clamp cells. The protein is Pheromone B alpha 2 receptor (BAR2) of Schizophyllum commune (Split gill fungus).